Here is a 287-residue protein sequence, read N- to C-terminus: Aromatic amino acid exporter YddG (287 aa).

The Cytoplasmic portion of the chain corresponds to 1–5 (MSRSS). Residues 6–24 (ATLIGFTAILLWSTLALAT) form a helical membrane-spanning segment. Residues 7–136 (TLIGFTAILL…MGLAGTVVLL (130 aa)) enclose the EamA 1 domain. At 25 to 31 (SSTGAVP) the chain is on the periplasmic side. Residues 32 to 54 (PFLLTALTFTIGGAVGIAAGLAR) traverse the membrane as a helical segment. Residues 55–65 (GVGLSVLRQPW) lie on the Cytoplasmic side of the membrane. A helical membrane pass occupies residues 66–86 (PVWVHGIGGLFGYHFFYFSAL). The Periplasmic portion of the chain corresponds to 87 to 90 (KLAP). The chain crosses the membrane as a helical span at residues 91 to 111 (PAEAGLVAYLWPLLIVLFSAF). The Cytoplasmic portion of the chain corresponds to 112–118 (LPGERLR). A helical transmembrane segment spans residues 119–139 (PAHVAGALMGLAGTVVLLGAR). Residues 140–149 (AGGFGFAPEY) lie on the Periplasmic side of the membrane. Residues 150-170 (VPGYLAAAACAVIWSVYSVAS) traverse the membrane as a helical segment. Residues 151–281 (PGYLAAAACA…ALIVGGAAVA (131 aa)) form the EamA 2 domain. Over 171–176 (RRFARV) the chain is Cytoplasmic. Residues 177 to 198 (PTEVVAGFCLATAALSALCHIL) form a helical membrane-spanning segment. Residues 199-208 (FEPSVWPVGS) are Periplasmic-facing. Residues 209-233 (EWLAVVALGIGPVGIAFYTWDIGMK) form a helical membrane-spanning segment. The Cytoplasmic segment spans residues 234-236 (RGD). A helical transmembrane segment spans residues 237-258 (VRLLGVLSYAAPVLSTLLLVVA). Over 259–264 (GFAAPS) the chain is Periplasmic. The chain crosses the membrane as a helical span at residues 265 to 284 (GALAIACALIVGGAAVATLL). Residues 285-287 (ARR) lie on the Cytoplasmic side of the membrane.

Belongs to the drug/metabolite transporter (DMT) superfamily. Aromatic amino acid/paraquat exporter (ArAA/P-E) (TC 2.A.7.17) family.

It is found in the cell inner membrane. It catalyses the reaction L-threonine(in) = L-threonine(out). The catalysed reaction is L-methionine(in) = L-methionine(out). It carries out the reaction L-lysine(in) = L-lysine(out). The enzyme catalyses L-glutamate(out) = L-glutamate(in). In terms of biological role, amino acid transporter with broad substrate specificity. Can transport various amino acids, including L-threonine, L-methionine, L-lysine and L-glutamate. This Ancylobacter novellus (strain ATCC 8093 / DSM 506 / JCM 20403 / CCM 1077 / IAM 12100 / NBRC 12443 / NCIMB 10456) (Starkeya novella) protein is Aromatic amino acid exporter YddG.